The following is a 245-amino-acid chain: NAD(P)H-quinone oxidoreductase subunit K (245 aa).

Residues C58, C59, C123, and C154 each coordinate [4Fe-4S] cluster.

This sequence belongs to the complex I 20 kDa subunit family. In terms of assembly, NDH-1 can be composed of about 15 different subunits; different subcomplexes with different compositions have been identified which probably have different functions. Requires [4Fe-4S] cluster as cofactor.

The protein localises to the cellular thylakoid membrane. The catalysed reaction is a plastoquinone + NADH + (n+1) H(+)(in) = a plastoquinol + NAD(+) + n H(+)(out). It carries out the reaction a plastoquinone + NADPH + (n+1) H(+)(in) = a plastoquinol + NADP(+) + n H(+)(out). NDH-1 shuttles electrons from an unknown electron donor, via FMN and iron-sulfur (Fe-S) centers, to quinones in the respiratory and/or the photosynthetic chain. The immediate electron acceptor for the enzyme in this species is believed to be plastoquinone. Couples the redox reaction to proton translocation, and thus conserves the redox energy in a proton gradient. Cyanobacterial NDH-1 also plays a role in inorganic carbon-concentration. This is NAD(P)H-quinone oxidoreductase subunit K from Nostoc sp. (strain PCC 7120 / SAG 25.82 / UTEX 2576).